A 186-amino-acid polypeptide reads, in one-letter code: Quinone reductase (186 aa).

FMN contacts are provided by residues 13-20, 80-83, and serine 116; these read SLRKESYN and EYNR.

It belongs to the SsuE family. As to quaternary structure, homotetramer. Dimer of dimers. The tetrameric configuration has a central role in chromate reductase activity. It depends on FMN as a cofactor.

It catalyses the reaction a quinone + NADH + H(+) = a quinol + NAD(+). The catalysed reaction is a quinone + NADPH + H(+) = a quinol + NADP(+). The enzyme catalyses Cr(6+) + 2 NADH + O2 = Cr(3+) + superoxide + 2 NAD(+) + 2 H(+). It carries out the reaction Cr(6+) + 2 NADPH + O2 = Cr(3+) + superoxide + 2 NADP(+) + 2 H(+). May be inhibited by divalent cations. Functionally, catalyzes the reduction of quinones. Acts by simultaneous two-electron transfer, avoiding formation of highly reactive semiquinone intermediates and producing quinols that promote tolerance of H(2)O(2). Quinone reduction is probably the primary biological role of ChrR. Can also reduce toxic chromate to insoluble and less toxic Cr(3+). Catalyzes the transfer of three electrons to Cr(6+) producing Cr(3+) and one electron to molecular oxygen. This reaction produces transiently a minimal amount of the toxic Cr(5+) species and reactive oxygen species (ROS). Chromate reduction protects the cell against chromate toxicity, but is likely a secondary activity. Can also reduce potassium ferricyanide and 2,6-dichloroindophenol. During chromate reduction, displays an eightfold preference for NADH over NADPH. In Pseudomonas putida (strain ATCC 47054 / DSM 6125 / CFBP 8728 / NCIMB 11950 / KT2440), this protein is Quinone reductase.